Here is an 879-residue protein sequence, read N- to C-terminus: Phosphoenolpyruvate carboxylase (879 aa).

Active-site residues include histidine 138 and lysine 545.

The protein belongs to the PEPCase type 1 family. The cofactor is Mg(2+).

It carries out the reaction oxaloacetate + phosphate = phosphoenolpyruvate + hydrogencarbonate. Its function is as follows. Forms oxaloacetate, a four-carbon dicarboxylic acid source for the tricarboxylic acid cycle. The chain is Phosphoenolpyruvate carboxylase from Haemophilus influenzae (strain PittEE).